The chain runs to 97 residues: Large ribosomal subunit protein uL23 (97 aa).

This sequence belongs to the universal ribosomal protein uL23 family. In terms of assembly, part of the 50S ribosomal subunit. Contacts protein L29, and trigger factor when it is bound to the ribosome.

One of the early assembly proteins it binds 23S rRNA. One of the proteins that surrounds the polypeptide exit tunnel on the outside of the ribosome. Forms the main docking site for trigger factor binding to the ribosome. The chain is Large ribosomal subunit protein uL23 from Limosilactobacillus fermentum (strain NBRC 3956 / LMG 18251) (Lactobacillus fermentum).